Consider the following 320-residue polypeptide: Phospho-N-acetylmuramoyl-pentapeptide-transferase (320 aa).

9 helical membrane passes run 5–25, 51–71, 76–96, 124–144, 145–165, 176–196, 198–218, 233–255, and 298–318; these read LWAL…LIKF, MGGL…GAAY, GVVA…IGGI, VVIM…IPMI, GTIN…VGWS, GLLA…AMHM, NHII…FLIF, LALG…LIWF, and WQID…GIFY.

This sequence belongs to the glycosyltransferase 4 family. MraY subfamily. Requires Mg(2+) as cofactor.

It localises to the cell membrane. It catalyses the reaction UDP-N-acetyl-alpha-D-muramoyl-L-alanyl-gamma-D-glutamyl-L-lysyl-D-alanyl-D-alanine + di-trans,octa-cis-undecaprenyl phosphate = Mur2Ac(oyl-L-Ala-gamma-D-Glu-L-Lys-D-Ala-D-Ala)-di-trans,octa-cis-undecaprenyl diphosphate + UMP. It participates in cell wall biogenesis; peptidoglycan biosynthesis. In terms of biological role, catalyzes the initial step of the lipid cycle reactions in the biosynthesis of the cell wall peptidoglycan: transfers peptidoglycan precursor phospho-MurNAc-pentapeptide from UDP-MurNAc-pentapeptide onto the lipid carrier undecaprenyl phosphate, yielding undecaprenyl-pyrophosphoryl-MurNAc-pentapeptide, known as lipid I. This chain is Phospho-N-acetylmuramoyl-pentapeptide-transferase, found in Leuconostoc citreum (strain KM20).